We begin with the raw amino-acid sequence, 303 residues long: Probable 5-dehydro-4-deoxyglucarate dehydratase (303 aa).

It belongs to the DapA family.

It carries out the reaction 5-dehydro-4-deoxy-D-glucarate + H(+) = 2,5-dioxopentanoate + CO2 + H2O. The protein operates within carbohydrate acid metabolism; D-glucarate degradation; 2,5-dioxopentanoate from D-glucarate: step 2/2. The chain is Probable 5-dehydro-4-deoxyglucarate dehydratase from Azotobacter vinelandii (strain DJ / ATCC BAA-1303).